The primary structure comprises 276 residues: NH(3)-dependent NAD(+) synthetase (276 aa).

43 to 50 (GISGGVDS) provides a ligand contact to ATP. Aspartate 49 is a Mg(2+) binding site. Arginine 146 contacts deamido-NAD(+). Residue threonine 166 participates in ATP binding. Residue glutamate 171 coordinates Mg(2+). Lysine 179 and aspartate 186 together coordinate deamido-NAD(+). Residues lysine 195 and threonine 217 each coordinate ATP. 266–267 (HK) lines the deamido-NAD(+) pocket.

It belongs to the NAD synthetase family. Homodimer.

The enzyme catalyses deamido-NAD(+) + NH4(+) + ATP = AMP + diphosphate + NAD(+) + H(+). It functions in the pathway cofactor biosynthesis; NAD(+) biosynthesis; NAD(+) from deamido-NAD(+) (ammonia route): step 1/1. In terms of biological role, catalyzes the ATP-dependent amidation of deamido-NAD to form NAD. Uses ammonia as a nitrogen source. This is NH(3)-dependent NAD(+) synthetase from Vibrio atlanticus (strain LGP32) (Vibrio splendidus (strain Mel32)).